Here is a 413-residue protein sequence, read N- to C-terminus: Aspartate aminotransferase, cytoplasmic (413 aa).

The L-aspartate site is built by G39 and W141. S149 carries the phosphoserine modification. Residue N195 coordinates L-aspartate. At K259 the chain carries N6-(pyridoxal phosphate)lysine. Residue R387 participates in L-aspartate binding.

Belongs to the class-I pyridoxal-phosphate-dependent aminotransferase family. As to quaternary structure, homodimer. Pyridoxal 5'-phosphate serves as cofactor.

Its subcellular location is the cytoplasm. It catalyses the reaction L-aspartate + 2-oxoglutarate = oxaloacetate + L-glutamate. The catalysed reaction is L-cysteine + 2-oxoglutarate = 2-oxo-3-sulfanylpropanoate + L-glutamate. It carries out the reaction (2S)-2-aminobutanoate + 2-oxoglutarate = 2-oxobutanoate + L-glutamate. The enzyme catalyses 3-sulfino-L-alanine + 2-oxoglutarate = 3-sulfinopyruvate + L-glutamate. In terms of biological role, biosynthesis of L-glutamate from L-aspartate or L-cysteine. Important regulator of levels of glutamate, the major excitatory neurotransmitter of the vertebrate central nervous system. Acts as a scavenger of glutamate in brain neuroprotection. The aspartate aminotransferase activity is involved in hepatic glucose synthesis during development and in adipocyte glyceroneogenesis. Using L-cysteine as substrate, regulates levels of mercaptopyruvate, an important source of hydrogen sulfide. Mercaptopyruvate is converted into H(2)S via the action of 3-mercaptopyruvate sulfurtransferase (3MST). Hydrogen sulfide is an important synaptic modulator and neuroprotectant in the brain. The chain is Aspartate aminotransferase, cytoplasmic from Pan troglodytes (Chimpanzee).